Consider the following 462-residue polypeptide: Signal recognition particle protein (462 aa).

GTP is bound by residues glycine 107–threonine 114, aspartate 190–arginine 194, and threonine 248–aspartate 251.

This sequence belongs to the GTP-binding SRP family. SRP54 subfamily. In terms of assembly, part of the signal recognition particle protein translocation system, which is composed of SRP and FtsY. SRP is a ribonucleoprotein composed of Ffh and a 4.5S RNA molecule.

It localises to the cytoplasm. The enzyme catalyses GTP + H2O = GDP + phosphate + H(+). Involved in targeting and insertion of nascent membrane proteins into the cytoplasmic membrane. Binds to the hydrophobic signal sequence of the ribosome-nascent chain (RNC) as it emerges from the ribosomes. The SRP-RNC complex is then targeted to the cytoplasmic membrane where it interacts with the SRP receptor FtsY. Interaction with FtsY leads to the transfer of the RNC complex to the Sec translocase for insertion into the membrane, the hydrolysis of GTP by both Ffh and FtsY, and the dissociation of the SRP-FtsY complex into the individual components. The chain is Signal recognition particle protein from Haemophilus influenzae (strain ATCC 51907 / DSM 11121 / KW20 / Rd).